Here is a 571-residue protein sequence, read N- to C-terminus: Zinc metalloproteinase-disintegrin-like jararhagin (571 aa).

The propeptide occupies A1 to A150. The residue at position 151 (E151) is a Pyrrolidone carboxylic acid (Glu). The Peptidase M12B domain maps to K159 to P355. Ca(2+)-binding residues include E162 and D246. Cystine bridges form between C270–C350, C310–C334, and C312–C317. H295 provides a ligand contact to Zn(2+). E296 is an active-site residue. The Zn(2+) site is built by H299 and H305. N333 carries N-linked (GlcNAc...) asparagine glycosylation. The Ca(2+) site is built by C350, N353, V365, N368, L370, E372, E375, and D378. The 87-residue stretch at P363–N449 folds into the Disintegrin domain. Intrachain disulfides connect C366-C385, C366-C395, C377-C390, C377-C395, C379-C385, C389-C412, C403-C409, C408-C434, C421-C441, C428-C453, C428-C460, C453-C465, C460-C465, C472-C487, C472-C522, C487-C533, C500-C510, C510-C517, C517-C559, C522-C533, C553-C564, and C559-C564. Positions E427–D429 match the D/ECD-tripeptide motif. Positions 429, 430, 432, 444, and 445 each coordinate Ca(2+).

This sequence belongs to the venom metalloproteinase (M12B) family. P-III subfamily. P-IIIb sub-subfamily. Monomer (Jararhagin and Jararhagin-C) and dimer (Jaracetin). It depends on Zn(2+) as a cofactor. Post-translationally, the N-terminus of Jararhagin is blocked. Expressed by the venom gland.

It is found in the secreted. The enzyme catalyses Cleavage of 10-His-|-Leu-11, 14-Ala-|-Leu-15, 16-Tyr-|-Leu-17 and 24-Phe-|-Phe-25 bonds in insulin B chain.. Its activity is regulated as follows. Inhibited by EDTA, 1,10 phenanthroline and batimastat (a peptidomimetic MMP inhibitor). In terms of biological role, snake venom zinc metalloproteinase-disintegrin-like jararhagin: causes hemorrhage. This is the result of the degradation of sub-endothelial matrix proteins leading to the disruption of the blood vessel endothelium, with accompanying disturbances in platelet function. It is able to degrade von Willebrand factor (vWF) and it hydrolyzes the alpha-chain of fibrinogen (FGA) while leaving the beta and gamma chains unaffected. It inhibits collagen-induced platelet aggregation through the binding to alpha-2/beta-1 integrin (ITGA2/ITGB1) (collagen receptor), and it cleaves the beta-1 subunit of the same integrin, inhibiting platelet interaction and ultimately causing impairment of signal transduction. It has inability to be affected by the plasma inhibitor alpha(2)-macroglobulin. In fibroblasts, it functions as a collagen-mimetic substrate and, in endothelial cells, it causes apoptosis and indirectly inhibits cell proliferation by release of angiostatin-like compounds. It induces a strong pro-inflammatory response characterized by intense leukocyte accumulation and release of cytokines at the site of the injection. Although hemorrhage and edema are a response to the direct effect of this toxin, jararhagin-induced inflammation and necrosis are dependent on macrophages and key pro-inflammatory cytokines or their receptors. It also possesses anti-tumorgenic properties. Functionally, the monomeric form inhibits collagen- and ADP-induced platelet aggregation, but has no effect on glycoprotein Ib-IX-dependent (GP1BA/GP5/GP9) platelet agglutination. Locally activates the early events of an acute inflammatory response as leukocyte rolling and pro-inflammatory cytokine release. The dimeric form jaracetin may be a dimeric form of jararhagin-C. It binds to von Willebrand factor (VWF) and induces its interaction with GPIbalpha (GP1BA) (via the vWF A1 domain), resulting in platelet aggregation. Also binds the alpha-2 subunit of the alpha-2/beta-1 (ITGA2/ITGB1) integrin. It potently induces platelet aggregation in citrated platelet-rich plasma. The protein is Zinc metalloproteinase-disintegrin-like jararhagin of Bothrops jararaca (Jararaca).